The sequence spans 118 residues: Large ribosomal subunit protein uL18 (118 aa).

The protein belongs to the universal ribosomal protein uL18 family. As to quaternary structure, part of the 50S ribosomal subunit; part of the 5S rRNA/L5/L18/L25 subcomplex. Contacts the 5S and 23S rRNAs.

This is one of the proteins that bind and probably mediate the attachment of the 5S RNA into the large ribosomal subunit, where it forms part of the central protuberance. This chain is Large ribosomal subunit protein uL18, found in Ralstonia pickettii (strain 12J).